The primary structure comprises 384 residues: Galactokinase (384 aa).

34-37 (EHTD) contributes to the substrate binding site. An ATP-binding site is contributed by 123–129 (SSGLSSS). Mg(2+)-binding residues include S129 and E161. The active-site Proton acceptor is the D173. Position 222 (Y222) interacts with substrate.

It belongs to the GHMP kinase family. GalK subfamily.

Its subcellular location is the cytoplasm. It catalyses the reaction alpha-D-galactose + ATP = alpha-D-galactose 1-phosphate + ADP + H(+). Its pathway is carbohydrate metabolism; galactose metabolism. Its function is as follows. Catalyzes the transfer of the gamma-phosphate of ATP to D-galactose to form alpha-D-galactose-1-phosphate (Gal-1-P). In Glaesserella parasuis serovar 5 (strain SH0165) (Haemophilus parasuis), this protein is Galactokinase.